Here is a 437-residue protein sequence, read N- to C-terminus: O-antigen export system ATP-binding protein RfbB (437 aa).

Positions Leu37–Ala256 constitute an ABC transporter domain. Gly69 to Ser76 serves as a coordination point for ATP.

This sequence belongs to the ABC transporter superfamily.

Its subcellular location is the cell inner membrane. Functionally, may form an ATP-driven O-antigen export apparatus, in association with RfbA. The protein is O-antigen export system ATP-binding protein RfbB (rfbB) of Myxococcus xanthus.